A 1659-amino-acid polypeptide reads, in one-letter code: MATDGASCEPDLSRAPEDAAGAAAEAAKKEFDVDTLSKSELRMLLSVMEGELEARDLVIEALRARRKEVFIQERYGRFNLNDPFLALQRDYEAGAGDKEKKPVCTNPLSILEAVMAHCRKMQERMSAQLAAAESRQKKLEMEKLQLQALEQEHKKLAARLEEERGKNKQVVLMLVKECKQLSGKVIEEAQKLEDVMAKLEEEKKKTNELEEELSAEKQRSTEMEAQMEKQLSEFDTEREQLRAKLNREEAHTTDLKEEIDKMKKMIEQLKRGSDSKPSLSLPRKTKDRRLVSISVGTEGTVTRSVACQTDLVTESADHVKKLPLTMPVKPSTGSPLASANAKGSAAMARPGIDRQTSHGDLIGVSVPAFPPSSANRIEENGPSTGLTPDPTSSTPPLPGNAAPPTAQTPGITPQNSQAPPMHSLHSPCANASLHPGLNPRIQAARFRFQGNANDPDQNGNTTQSPPSRDVSPTSRDNLVAKQLARNTVTQALSRFTGPQAGAPPRPGAPPTGDVSTHHSVGRTGVKTHGVARVDRGNPPPIPPKKPGLSQTPSPPHPQLKVIIDSSRASNTGAKGDNKTVASPPSSLPQGNRVINEENLPKSSSPQLPPKPSIDLTVAPAGCTVSALATSQVGAWPAATPGLNQPACSGSSLAIPTTIAFCSSINPVSASSCRPGASDSLLVTASGWSPSLTPLLMSGGPAPLAGRPTLLQQAAAQGNVTLLLMLLNEEGLDINYSCEDGHSALYSAAKNGHTDCVRLLLSAEAQVNAADKNGFTPLCAAAAQGHFECVELLIAYDANINHAADGGQTPLYLACKNGNKECIKLLLEAGTDRNVKTTDGWTPVHAAVDTGNVDSLKLLMYHRVPAHGNSFSEEESESGVFDLDGGGESPEGKSKPVVTADFINHANREGWTAAHIAASKGFKNCLEILCRHGGLETERRDKCNRTVHDVATDDCKHLLENLNALKIPLRISVGEIEPSNYGSDDFECENTICTLNIRKQTSWDDFSKAVSQALTNHFQAISSDGWWSLEDVTCNNSTDSNIGLSSRSIRSITLGNVPWSVGQSFLQSPWDFMMKNKAEHITVLLSGPQEGCLSSVTYASMIPLQMMQNYLRLVEQYHNVIFHGPEGSLQDYIVRQLALCLKHRQMAAGFSCEIVRAEVDAGFSKKQLLDLFISSACLIPVKQSPVKKKIIIILENLEKSSLSELLRDFLAPLENRSAESPCTFQKGNGMSECYYFHENCFLMGTIAKACLQGSDLLVQQHFRWVQLRWDGEPMQGLLQRFLRRKVVNKFRGQVPPPCDPVCKIVDWALSVWRQLNSCLARLGTPEALLGPKYFLSCPVVPGHAQVTVKWMSKLWNGVITPRVQEAILSRASVKRQPGLGQTTAKRHPSQGQQAVVKAALSILLNKAVLHGCPLPRAELEQHRADFKGGSFPLSIVASYNSCSKKKGESGAWRKVNTSPRRKSGRFSLPTWNKPDLSTEGIKSKTLSQLNCNRNASLSKQKSLENDVSLTLNLDQRLSLGSDDEADLVKELQSMCSSKSESDISKIADSRDDLRMFDSAGNNPVFSAAINNLRMPVSQKEVCPLSSHQTTECSNSKSKTELGVSRVKSFLPVPRSKVTQCSQNTKRNSSSSNTRQIEINNNSKEENWNLHKNEHLEKPNK.

Positions 1-23 are disordered; the sequence is MATDGASCEPDLSRAPEDAAGAA. Residues 119–276 adopt a coiled-coil conformation; sequence RKMQERMSAQ…EQLKRGSDSK (158 aa). Disordered stretches follow at residues 324 to 436 and 450 to 474; these read LTMP…LHPG and GNANDPDQNGNTTQSPPSRDVSPTS. Composition is skewed to low complexity over residues 337 to 348 and 381 to 392; these read ASANAKGSAAMA and GPSTGLTPDPTS. The segment covering 405-418 has biased composition (polar residues); it reads TAQTPGITPQNSQA. Arg-494 carries the post-translational modification Asymmetric dimethylarginine. The tract at residues 495–612 is disordered; the sequence is FTGPQAGAPP…SSPQLPPKPS (118 aa). The segment covering 579–589 has biased composition (polar residues); that stretch reads TVASPPSSLPQ. 5 ANK repeats span residues 705–735, 739–768, 772–801, 805–834, and 838–867; these read GRPTLLQQAAAQGNVTLLLMLLNEEGLDINY, DGHSALYSAAKNGHTDCVRLLLSAEAQVNA, NGFTPLCAAAAQGHFECVELLIAYDANINH, GGQTPLYLACKNGNKECIKLLLEAGTDRNV, and DGWTPVHAAVDTGNVDSLKLLMYHRVPAHG. The disordered stretch occupies residues 869–893; the sequence is SFSEEESESGVFDLDGGGESPEGKS. An ANK 6 repeat occupies 908–938; that stretch reads EGWTAAHIAASKGFKNCLEILCRHGGLETER. The segment at 1443 to 1478 is disordered; it reads KKKGESGAWRKVNTSPRRKSGRFSLPTWNKPDLSTE. Ser-1520 carries the post-translational modification Phosphoserine. A disordered region spans residues 1613–1659; the sequence is RSKVTQCSQNTKRNSSSSNTRQIEINNNSKEENWNLHKNEHLEKPNK. The segment covering 1620-1634 has biased composition (low complexity); the sequence is SQNTKRNSSSSNTRQ. Over residues 1641–1659 the composition is skewed to basic and acidic residues; it reads SKEENWNLHKNEHLEKPNK.

Interacts with CTTN/cortactin SH3 domain. Interacts with STRN, STRN4/zinedin and MOB4/phocein; this interactions mediate the association with the STRIPAK core complex and may regulate dendritic spine distribution of the STRIPAK complex in hippocampal neurons. Activation of glutamate receptors weakens the interaction with STRN and STRN4.

The protein localises to the cytoplasm. It is found in the cell cortex. Its subcellular location is the cell projection. The protein resides in the dendritic spine. In terms of biological role, regulates the dendritic spine distribution of CTTN/cortactin in hippocampal neurons, and thus controls dendritic spinogenesis and dendritic spine maintenance. Associates with the striatin-interacting phosphatase and kinase (STRIPAK) core complex to regulate dendritic spine distribution of the STRIPAK complex in hippocampal neurons. In Saimiri boliviensis boliviensis (Bolivian squirrel monkey), this protein is Cortactin-binding protein 2 (CTTNBP2).